Consider the following 233-residue polypeptide: Leucyl/phenylalanyl-tRNA--protein transferase (233 aa).

This sequence belongs to the L/F-transferase family.

It is found in the cytoplasm. It carries out the reaction N-terminal L-lysyl-[protein] + L-leucyl-tRNA(Leu) = N-terminal L-leucyl-L-lysyl-[protein] + tRNA(Leu) + H(+). The catalysed reaction is N-terminal L-arginyl-[protein] + L-leucyl-tRNA(Leu) = N-terminal L-leucyl-L-arginyl-[protein] + tRNA(Leu) + H(+). The enzyme catalyses L-phenylalanyl-tRNA(Phe) + an N-terminal L-alpha-aminoacyl-[protein] = an N-terminal L-phenylalanyl-L-alpha-aminoacyl-[protein] + tRNA(Phe). In terms of biological role, functions in the N-end rule pathway of protein degradation where it conjugates Leu, Phe and, less efficiently, Met from aminoacyl-tRNAs to the N-termini of proteins containing an N-terminal arginine or lysine. In Klebsiella pneumoniae subsp. pneumoniae (strain ATCC 700721 / MGH 78578), this protein is Leucyl/phenylalanyl-tRNA--protein transferase.